Consider the following 754-residue polypeptide: Protein neuralized (754 aa).

The region spanning 106–260 is the NHR 1 domain; the sequence is PLQFHSVHGD…NCTGIEFLDS (155 aa). A compositionally biased stretch (low complexity) spans 280 to 297; it reads QQQQMPQPAANASSALNS. The disordered stretch occupies residues 280-308; that stretch reads QQQQMPQPAANASSALNSHHPHQQSRRSL. A phosphoserine mark is found at Ser-338 and Ser-341. In terms of domain architecture, NHR 2 spans 368–523; the sequence is PVPFHNTKGR…STQSLRMFRQ (156 aa). The RING-type zinc finger occupies 701 to 742; the sequence is CTICYENPIDSVLYMCGHMCMCYDCAIEQWRGVGGGQCPLCR.

The protein resides in the nucleus. In terms of biological role, involved in neurogenesis. Interacts with other neurogenic proteins in the specification of the neuroblast versus epidermoblast cell fate. The polypeptide is Protein neuralized (neur) (Drosophila melanogaster (Fruit fly)).